Here is a 141-residue protein sequence, read N- to C-terminus: Hemoglobin subunit alpha-D (141 aa).

Residues 1-141 (MLTAEDKKLI…VAAVLAEKYR (141 aa)) enclose the Globin domain. 2 residues coordinate heme b: H58 and H87.

As to quaternary structure, heterotetramer of two alpha-D chains and two beta chains. Red blood cells.

Its function is as follows. Involved in oxygen transport from the lung to the various peripheral tissues. The sequence is that of Hemoglobin subunit alpha-D (HBAD) from Aythya fuligula (Tufted duck).